A 241-amino-acid chain; its full sequence is Small ribosomal subunit protein eS4 (241 aa).

Residues 37–99 (IPLGLLLRDY…ADLYLRIVPD (63 aa)) form the S4 RNA-binding domain.

This sequence belongs to the eukaryotic ribosomal protein eS4 family.

In Metallosphaera sedula (strain ATCC 51363 / DSM 5348 / JCM 9185 / NBRC 15509 / TH2), this protein is Small ribosomal subunit protein eS4.